We begin with the raw amino-acid sequence, 429 residues long: Tyrosine-protein kinase STYK1 (429 aa).

Residues 30–50 traverse the membrane as a helical segment; sequence VIIVPALLVGGFLILLAIILW. Residues 58–83 form a disordered region; sequence SQRQSPGPRGTASVPASRGRSQEAAG. One can recognise a Protein kinase domain in the interval 119–390; that stretch reads LEVLEQIHSG…GQLLQRLEAA (272 aa). ATP-binding positions include 125 to 133 and Lys-152; that span reads IHSGSCGTL. Asp-256 (proton acceptor) is an active-site residue.

This sequence belongs to the protein kinase superfamily. Tyr protein kinase family. In terms of tissue distribution, highly expressed in colon and small intestine. Weakly or not expressed in spleen, skeletal muscle, liver, kidney, heart and brain. Expressed in transformed kidney cell lines (COS-1 and HEK293T).

The protein localises to the membrane. It carries out the reaction L-tyrosyl-[protein] + ATP = O-phospho-L-tyrosyl-[protein] + ADP + H(+). Its function is as follows. Probable tyrosine protein-kinase, which has strong transforming capabilities on a variety of cell lines including NIH 3T3 fibroblasts and on athymic nude mice. When overexpressed, it can also induce tumor cell invasion as well as metastasis in distant organs. May act by activating both MAP kinase and phosphatidylinositol 3'-kinases (PI3K) pathways. This Mus musculus (Mouse) protein is Tyrosine-protein kinase STYK1 (Styk1).